The primary structure comprises 320 residues: Methionyl-tRNA formyltransferase (320 aa).

Position 114–117 (114–117 (SLLP)) interacts with (6S)-5,6,7,8-tetrahydrofolate.

It belongs to the Fmt family.

It carries out the reaction L-methionyl-tRNA(fMet) + (6R)-10-formyltetrahydrofolate = N-formyl-L-methionyl-tRNA(fMet) + (6S)-5,6,7,8-tetrahydrofolate + H(+). Functionally, attaches a formyl group to the free amino group of methionyl-tRNA(fMet). The formyl group appears to play a dual role in the initiator identity of N-formylmethionyl-tRNA by promoting its recognition by IF2 and preventing the misappropriation of this tRNA by the elongation apparatus. The chain is Methionyl-tRNA formyltransferase from Acinetobacter baumannii (strain AB307-0294).